A 205-amino-acid polypeptide reads, in one-letter code: Small ribosomal subunit protein uS4 (205 aa).

Positions 103–173 (RRLQTIVMKK…LEKSKRAEAA (71 aa)) constitute an S4 RNA-binding domain. A disordered region spans residues 174 to 205 (AREAAAEAAEAEQAAAQAAAPTPAPAAAAPKQ). A compositionally biased stretch (low complexity) spans 179 to 205 (AEAAEAEQAAAQAAAPTPAPAAAAPKQ).

Belongs to the universal ribosomal protein uS4 family. Part of the 30S ribosomal subunit. Contacts protein S5. The interaction surface between S4 and S5 is involved in control of translational fidelity.

One of the primary rRNA binding proteins, it binds directly to 16S rRNA where it nucleates assembly of the body of the 30S subunit. Functionally, with S5 and S12 plays an important role in translational accuracy. This is Small ribosomal subunit protein uS4 from Cenarchaeum symbiosum (strain A).